A 179-amino-acid chain; its full sequence is Large ribosomal subunit protein uL5c (179 aa).

It belongs to the universal ribosomal protein uL5 family. Part of the 50S ribosomal subunit; contacts the 5S rRNA.

The protein localises to the plastid. The protein resides in the chloroplast. In terms of biological role, binds 5S rRNA, forms part of the central protuberance of the 50S subunit. The polypeptide is Large ribosomal subunit protein uL5c (rpl5) (Euglena gracilis).